The chain runs to 520 residues: Laccase (520 aa).

The first 21 residues, 1–21 (MHTFLRSTALVVAGLSARALA), serve as a signal peptide directing secretion. Plastocyanin-like domains are found at residues 22–148 (SIGP…FVVY) and 160–304 (VDDD…ILRY). An N-linked (GlcNAc...) asparagine glycan is attached at N75. H85, H87, H130, and H132 together coordinate Cu cation. Disulfide bonds link C106-C509 and C138-C227. Residues N352 and N402 are each glycosylated (N-linked (GlcNAc...) asparagine). A Plastocyanin-like 3 domain is found at 373-496 (TVPVLLQILS…VFAEDIPDVA (124 aa)). 7 residues coordinate Cu cation: H418, H421, H423, H473, C474, H475, and H479.

It belongs to the multicopper oxidase family. Requires Cu cation as cofactor.

The protein resides in the secreted. It carries out the reaction 4 hydroquinone + O2 = 4 benzosemiquinone + 2 H2O. Lignin degradation and detoxification of lignin-derived products. The polypeptide is Laccase (LAC) (Phlebia radiata (White-rot fungus)).